Reading from the N-terminus, the 351-residue chain is Nicotinate-nucleotide--dimethylbenzimidazole phosphoribosyltransferase (351 aa).

Glu319 functions as the Proton acceptor in the catalytic mechanism.

It belongs to the CobT family.

The enzyme catalyses 5,6-dimethylbenzimidazole + nicotinate beta-D-ribonucleotide = alpha-ribazole 5'-phosphate + nicotinate + H(+). The protein operates within nucleoside biosynthesis; alpha-ribazole biosynthesis; alpha-ribazole from 5,6-dimethylbenzimidazole: step 1/2. Functionally, catalyzes the synthesis of alpha-ribazole-5'-phosphate from nicotinate mononucleotide (NAMN) and 5,6-dimethylbenzimidazole (DMB). The protein is Nicotinate-nucleotide--dimethylbenzimidazole phosphoribosyltransferase of Desulforamulus reducens (strain ATCC BAA-1160 / DSM 100696 / MI-1) (Desulfotomaculum reducens).